We begin with the raw amino-acid sequence, 178 residues long: uncharacterized protein (178 aa).

A signal peptide spans 1-20 (MKKLLVASLALLILTPVALA).

This is an uncharacterized protein from Archaeoglobus fulgidus (strain ATCC 49558 / DSM 4304 / JCM 9628 / NBRC 100126 / VC-16).